The following is a 325-amino-acid chain: Acetyl-coenzyme A carboxylase carboxyl transferase subunit alpha (325 aa).

Residues 38-292 (RLEERLSKLQ…DGILKETLKS (255 aa)) enclose the CoA carboxyltransferase C-terminal domain.

It belongs to the AccA family. Acetyl-CoA carboxylase is a heterohexamer composed of biotin carboxyl carrier protein (AccB), biotin carboxylase (AccC) and two subunits each of ACCase subunit alpha (AccA) and ACCase subunit beta (AccD).

It is found in the cytoplasm. It catalyses the reaction N(6)-carboxybiotinyl-L-lysyl-[protein] + acetyl-CoA = N(6)-biotinyl-L-lysyl-[protein] + malonyl-CoA. It participates in lipid metabolism; malonyl-CoA biosynthesis; malonyl-CoA from acetyl-CoA: step 1/1. Component of the acetyl coenzyme A carboxylase (ACC) complex. First, biotin carboxylase catalyzes the carboxylation of biotin on its carrier protein (BCCP) and then the CO(2) group is transferred by the carboxyltransferase to acetyl-CoA to form malonyl-CoA. The chain is Acetyl-coenzyme A carboxylase carboxyl transferase subunit alpha from Bacillus velezensis (strain DSM 23117 / BGSC 10A6 / LMG 26770 / FZB42) (Bacillus amyloliquefaciens subsp. plantarum).